Reading from the N-terminus, the 381-residue chain is Creatine kinase B-type (381 aa).

Position 4 is a phosphoserine (Ser4). In terms of domain architecture, Phosphagen kinase N-terminal spans 11 to 98 (KLRFPAEDEF…FDPIIEDRHG (88 aa)). At Thr35 the chain carries Phosphothreonine. Lys45 is covalently cross-linked (Glycyl lysine isopeptide (Lys-Gly) (interchain with G-Cter in ubiquitin)). Val72 lines the creatine pocket. Residues 96–110 (RHGGYKPSDEHKTDL) are compositionally biased toward basic and acidic residues. The tract at residues 96–123 (RHGGYKPSDEHKTDLNPDNLQGGDDLDP) is disordered. Residues Lys101 and Lys107 each participate in a glycyl lysine isopeptide (Lys-Gly) (interchain with G-Cter in ubiquitin) cross-link. Tyr125 carries the phosphotyrosine modification. The 243-residue stretch at 125 to 367 (YVLSSRVRTG…KLLIEMEQRL (243 aa)) folds into the Phosphagen kinase C-terminal domain. Residues 128-132 (SSRVR), Arg130, Arg132, and His191 each bind ATP. Positions 130-138 (RVRTGRSIR) are internal MTS-like signal. Ser199 carries the post-translational modification Phosphoserine. Glu232 serves as a coordination point for creatine. Residue Arg236 coordinates ATP. Residue Tyr269 is modified to 3'-nitrotyrosine. A creatine-binding site is contributed by Ser285. Arg292 lines the ATP pocket. Phosphoserine is present on Ser309. Residues Arg320, 320-325 (RGTGGV), and Asp335 contribute to the ATP site. Position 322 is a phosphothreonine (Thr322). Lys381 participates in a covalent cross-link: Glycyl lysine isopeptide (Lys-Gly) (interchain with G-Cter in ubiquitin).

This sequence belongs to the ATP:guanido phosphotransferase family. In terms of assembly, dimer of identical or non-identical chains, which can be either B (brain type) or M (muscle type). With MM being the major form in skeletal muscle and myocardium, MB existing in myocardium, and BB existing in many tissues, especially brain. Interacts with SLC12A6 (via C-terminus); the interaction may be required for SLC12A6 potassium-chloride cotransport activity. In terms of processing, ubiquitinated by the ECS(ASB9) complex, leading to its degradation by the proteasome.

The protein localises to the cytoplasm. It is found in the cytosol. It localises to the mitochondrion. The protein resides in the cell membrane. It carries out the reaction creatine + ATP = N-phosphocreatine + ADP + H(+). Functionally, reversibly catalyzes the transfer of phosphate between ATP and various phosphogens (e.g. creatine phosphate). Creatine kinase isoenzymes play a central role in energy transduction in tissues with large, fluctuating energy demands, such as skeletal muscle, heart, brain and spermatozoa. Acts as a key regulator of adaptive thermogenesis as part of the futile creatine cycle: localizes to the mitochondria of thermogenic fat cells and acts by mediating phosphorylation of creatine to initiate a futile cycle of creatine phosphorylation and dephosphorylation. During the futile creatine cycle, creatine and N-phosphocreatine are in a futile cycle, which dissipates the high energy charge of N-phosphocreatine as heat without performing any mechanical or chemical work. In Oryctolagus cuniculus (Rabbit), this protein is Creatine kinase B-type (CKB).